The chain runs to 154 residues: Small ribosomal subunit protein bS16 (154 aa).

Over residues 111-121 (AAAGLAEAPTK) the composition is skewed to low complexity. The interval 111–154 (AAAGLAEAPTKPAKKAAKAEAAPKTDEAAPKTEEQAGAGSGEQG) is disordered. Residues 127–144 (AKAEAAPKTDEAAPKTEE) show a composition bias toward basic and acidic residues.

Belongs to the bacterial ribosomal protein bS16 family.

This chain is Small ribosomal subunit protein bS16, found in Salinispora tropica (strain ATCC BAA-916 / DSM 44818 / JCM 13857 / NBRC 105044 / CNB-440).